A 396-amino-acid chain; its full sequence is NADH-quinone oxidoreductase subunit D (396 aa).

It belongs to the complex I 49 kDa subunit family. In terms of assembly, NDH-1 is composed of 14 different subunits. Subunits NuoB, C, D, E, F, and G constitute the peripheral sector of the complex.

The protein resides in the cell inner membrane. It carries out the reaction a quinone + NADH + 5 H(+)(in) = a quinol + NAD(+) + 4 H(+)(out). Functionally, NDH-1 shuttles electrons from NADH, via FMN and iron-sulfur (Fe-S) centers, to quinones in the respiratory chain. The immediate electron acceptor for the enzyme in this species is believed to be ubiquinone. Couples the redox reaction to proton translocation (for every two electrons transferred, four hydrogen ions are translocated across the cytoplasmic membrane), and thus conserves the redox energy in a proton gradient. This Methylorubrum populi (strain ATCC BAA-705 / NCIMB 13946 / BJ001) (Methylobacterium populi) protein is NADH-quinone oxidoreductase subunit D.